The chain runs to 518 residues: Glutamate--cysteine ligase (518 aa).

It belongs to the glutamate--cysteine ligase type 1 family. Type 1 subfamily.

It catalyses the reaction L-cysteine + L-glutamate + ATP = gamma-L-glutamyl-L-cysteine + ADP + phosphate + H(+). It functions in the pathway sulfur metabolism; glutathione biosynthesis; glutathione from L-cysteine and L-glutamate: step 1/2. In Escherichia coli O8 (strain IAI1), this protein is Glutamate--cysteine ligase.